The chain runs to 86 residues: Large ribosomal subunit protein bL28 (86 aa).

This sequence belongs to the bacterial ribosomal protein bL28 family.

The sequence is that of Large ribosomal subunit protein bL28 from Phocaeicola vulgatus (strain ATCC 8482 / DSM 1447 / JCM 5826 / CCUG 4940 / NBRC 14291 / NCTC 11154) (Bacteroides vulgatus).